The chain runs to 158 residues: Cyclic pyranopterin monophosphate synthase (158 aa).

Substrate is bound by residues L76–H78 and M114–E115. D129 is a catalytic residue.

This sequence belongs to the MoaC family. In terms of assembly, homohexamer; trimer of dimers.

It carries out the reaction (8S)-3',8-cyclo-7,8-dihydroguanosine 5'-triphosphate = cyclic pyranopterin phosphate + diphosphate. It functions in the pathway cofactor biosynthesis; molybdopterin biosynthesis. Functionally, catalyzes the conversion of (8S)-3',8-cyclo-7,8-dihydroguanosine 5'-triphosphate to cyclic pyranopterin monophosphate (cPMP). In Brucella anthropi (strain ATCC 49188 / DSM 6882 / CCUG 24695 / JCM 21032 / LMG 3331 / NBRC 15819 / NCTC 12168 / Alc 37) (Ochrobactrum anthropi), this protein is Cyclic pyranopterin monophosphate synthase.